The following is a 406-amino-acid chain: (R)-benzylsuccinyl-CoA dehydrogenase (406 aa).

Belongs to the acyl-CoA dehydrogenase family. Homotetramer. It depends on FAD as a cofactor.

It catalyses the reaction (R)-2-benzylsuccinyl-CoA + oxidized [electron-transfer flavoprotein] + H(+) = (E)-2-benzylidenesuccinyl-CoA + reduced [electron-transfer flavoprotein]. It functions in the pathway xenobiotic degradation; toluene degradation. With respect to regulation, inhibited by (S)-benzylsuccinyl-CoA. Functionally, catalyzes the oxidation of benzylsuccinyl-CoA to benzylidenesuccinyl-CoA. This chain is (R)-benzylsuccinyl-CoA dehydrogenase (bbsG), found in Thauera aromatica.